The following is a 58-amino-acid chain: MALPKHKKSKSKRDKRRTHQKLTAPNVVSCPQCGDPKLPHHICPSCGTYKGRTLIETD.

Residues 1 to 20 (MALPKHKKSKSKRDKRRTHQ) are compositionally biased toward basic residues. A disordered region spans residues 1–26 (MALPKHKKSKSKRDKRRTHQKLTAPN).

It belongs to the bacterial ribosomal protein bL32 family.

In Desulfatibacillum aliphaticivorans, this protein is Large ribosomal subunit protein bL32.